Reading from the N-terminus, the 695-residue chain is Biosynthetic arginine decarboxylase 1 (695 aa).

Lys141 bears the N6-(pyridoxal phosphate)lysine mark. Residue 332–342 (LDVGGGLGVDY) participates in substrate binding.

The protein belongs to the Orn/Lys/Arg decarboxylase class-II family. SpeA subfamily. The cofactor is Mg(2+). Requires pyridoxal 5'-phosphate as cofactor.

It catalyses the reaction L-arginine + H(+) = agmatine + CO2. Catalyzes the biosynthesis of agmatine from arginine. The sequence is that of Biosynthetic arginine decarboxylase 1 (speA1) from Synechocystis sp. (strain ATCC 27184 / PCC 6803 / Kazusa).